A 397-amino-acid chain; its full sequence is Acetate kinase (397 aa).

Position 8 (N8) interacts with Mg(2+). Residue K15 coordinates ATP. Residue R89 coordinates substrate. The active-site Proton donor/acceptor is D146. Residues 206-210 (HVGNG), 283-285 (DMR), and 331-335 (GMGEN) each bind ATP. Residue E383 coordinates Mg(2+).

Belongs to the acetokinase family. As to quaternary structure, homodimer. Mg(2+) serves as cofactor. It depends on Mn(2+) as a cofactor.

Its subcellular location is the cytoplasm. It catalyses the reaction acetate + ATP = acetyl phosphate + ADP. It participates in metabolic intermediate biosynthesis; acetyl-CoA biosynthesis; acetyl-CoA from acetate: step 1/2. In terms of biological role, catalyzes the formation of acetyl phosphate from acetate and ATP. Can also catalyze the reverse reaction. The sequence is that of Acetate kinase from Streptococcus agalactiae serotype Ia (strain ATCC 27591 / A909 / CDC SS700).